A 275-amino-acid chain; its full sequence is Polyamine aminopropyltransferase (275 aa).

Residues 2 to 235 enclose the PABS domain; the sequence is EFWFTEKQTE…GMWTFTIGSK (234 aa). Position 31 (Gln-31) interacts with S-methyl-5'-thioadenosine. Residues His-62 and Asp-86 each contribute to the spermidine site. Residues Asp-106 and 137 to 138 contribute to the S-methyl-5'-thioadenosine site; that span reads DG. Asp-155 serves as the catalytic Proton acceptor. Residue 155 to 158 participates in spermidine binding; it reads DSTE. Pro-162 lines the S-methyl-5'-thioadenosine pocket.

The protein belongs to the spermidine/spermine synthase family. As to quaternary structure, homodimer or homotetramer.

The protein resides in the cytoplasm. It catalyses the reaction S-adenosyl 3-(methylsulfanyl)propylamine + putrescine = S-methyl-5'-thioadenosine + spermidine + H(+). It participates in amine and polyamine biosynthesis; spermidine biosynthesis; spermidine from putrescine: step 1/1. In terms of biological role, catalyzes the irreversible transfer of a propylamine group from the amino donor S-adenosylmethioninamine (decarboxy-AdoMet) to putrescine (1,4-diaminobutane) to yield spermidine. The polypeptide is Polyamine aminopropyltransferase (Shouchella clausii (strain KSM-K16) (Alkalihalobacillus clausii)).